The primary structure comprises 226 residues: UPF0758 protein SE_1336 (226 aa).

The MPN domain maps to Gln102 to Phe224. Residues His173, His175, and Asp186 each coordinate Zn(2+). The JAMM motif signature appears at His173 to Asp186.

This sequence belongs to the UPF0758 family.

The polypeptide is UPF0758 protein SE_1336 (Staphylococcus epidermidis (strain ATCC 12228 / FDA PCI 1200)).